Reading from the N-terminus, the 240-residue chain is Protein GrpE (240 aa).

The segment covering 1–13 (MTDNQRQSTTDGQ) has biased composition (polar residues). The tract at residues 1–89 (MTDNQRQSTT…DAEQKAEEHW (89 aa)) is disordered. Residues 20 to 38 (AQATAEAAEQTQATQASAA) are compositionally biased toward low complexity. Over residues 65–89 (EALRQRVEELEKALADAEQKAEEHW) the composition is skewed to basic and acidic residues.

This sequence belongs to the GrpE family. In terms of assembly, homodimer.

It is found in the cytoplasm. In terms of biological role, participates actively in the response to hyperosmotic and heat shock by preventing the aggregation of stress-denatured proteins, in association with DnaK and GrpE. It is the nucleotide exchange factor for DnaK and may function as a thermosensor. Unfolded proteins bind initially to DnaJ; upon interaction with the DnaJ-bound protein, DnaK hydrolyzes its bound ATP, resulting in the formation of a stable complex. GrpE releases ADP from DnaK; ATP binding to DnaK triggers the release of the substrate protein, thus completing the reaction cycle. Several rounds of ATP-dependent interactions between DnaJ, DnaK and GrpE are required for fully efficient folding. The protein is Protein GrpE of Halorhodospira halophila (strain DSM 244 / SL1) (Ectothiorhodospira halophila (strain DSM 244 / SL1)).